We begin with the raw amino-acid sequence, 207 residues long: Guanylate kinase (207 aa).

One can recognise a Guanylate kinase-like domain in the interval 5-184; sequence GNLFIVSAPS…ALADLKSIIF (180 aa). 12–19 contacts ATP; it reads APSGAGKS.

Belongs to the guanylate kinase family.

Its subcellular location is the cytoplasm. The enzyme catalyses GMP + ATP = GDP + ADP. Its function is as follows. Essential for recycling GMP and indirectly, cGMP. This chain is Guanylate kinase, found in Shewanella denitrificans (strain OS217 / ATCC BAA-1090 / DSM 15013).